Here is a 392-residue protein sequence, read N- to C-terminus: Selenide, water dikinase 1 (392 aa).

The active site involves cysteine 31. Residues lysine 32, 67–69 (GMD), aspartate 87, aspartate 110, and 161–164 (GGQT) contribute to the ATP site. Mg(2+) is bound at residue aspartate 69. Residue aspartate 110 participates in Mg(2+) binding. Aspartate 265 contributes to the Mg(2+) binding site.

Belongs to the selenophosphate synthase 1 family. Class II subfamily. As to quaternary structure, homodimer. Mg(2+) serves as cofactor.

The protein resides in the cell membrane. It is found in the nucleus membrane. It carries out the reaction hydrogenselenide + ATP + H2O = selenophosphate + AMP + phosphate + 2 H(+). In terms of biological role, synthesizes selenophosphate from selenide and ATP. The polypeptide is Selenide, water dikinase 1 (sephs1) (Xenopus tropicalis (Western clawed frog)).